The sequence spans 308 residues: UDP-N-acetylenolpyruvoylglucosamine reductase 2 (308 aa).

The FAD-binding PCMH-type domain maps to 31–197; sequence RIGGPADYLV…AEVVMALRPA (167 aa). The active site involves Arg-176. Ser-226 functions as the Proton donor in the catalytic mechanism. Residue Glu-296 is part of the active site.

This sequence belongs to the MurB family. The cofactor is FAD.

It localises to the cytoplasm. It catalyses the reaction UDP-N-acetyl-alpha-D-muramate + NADP(+) = UDP-N-acetyl-3-O-(1-carboxyvinyl)-alpha-D-glucosamine + NADPH + H(+). It participates in cell wall biogenesis; peptidoglycan biosynthesis. Its function is as follows. Cell wall formation. This Symbiobacterium thermophilum (strain DSM 24528 / JCM 14929 / IAM 14863 / T) protein is UDP-N-acetylenolpyruvoylglucosamine reductase 2.